The primary structure comprises 153 residues: Ribosomal RNA large subunit methyltransferase H (153 aa).

S-adenosyl-L-methionine-binding positions include leucine 70, glycine 102, and 121–126 (LSSMTF).

Belongs to the RNA methyltransferase RlmH family. As to quaternary structure, homodimer.

Its subcellular location is the cytoplasm. The catalysed reaction is pseudouridine(1915) in 23S rRNA + S-adenosyl-L-methionine = N(3)-methylpseudouridine(1915) in 23S rRNA + S-adenosyl-L-homocysteine + H(+). Specifically methylates the pseudouridine at position 1915 (m3Psi1915) in 23S rRNA. The polypeptide is Ribosomal RNA large subunit methyltransferase H (Dictyoglomus thermophilum (strain ATCC 35947 / DSM 3960 / H-6-12)).